We begin with the raw amino-acid sequence, 607 residues long: WD repeat-containing protein 1-A (607 aa).

WD repeat units lie at residues 4–45 (ELKK…IRNI), 48–87 (PAIADIYTEHAHQAVVARYAPSGFYIASGDTSGKLRIWDT), 93–135 (LLKY…LWDT), 138–176 (SVGEITGNIKVINSVDIKQTRPYRLVTGSDDNCCAFLEG), 180–218 (KFKFTMSDHSRFVNCVRFSPDGSKLASAGADGQIFLYDG), 224–263 (VCSLGGSKAHDGGIYAVSWSPDGTQLLSASGDKTTKIWDV), 270–306 (TTFNLGSDVLDQQLGCLWQKDYLLSVSLSGYINYLDK), 311–351 (RPLR…YWDA), 358–408 (TFTG…KMDV), 432–474 (LKDK…LYSI), 480–518 (KDEGKTLPAKGAVTDLAYSHDGAFLAVTDANKVVTVFSV), 523–561 (SEKNSYYGHHAKALSVAWSPDNEHFASSGMDMMVYVWTL), and 566–604 (TRIKMPDAHRLHHVSSLAWLDEHTLATVSHDACVKQWTV).

The protein belongs to the WD repeat AIP1 family.

The protein localises to the cell membrane. The protein resides in the cytoplasm. Its subcellular location is the cytoskeleton. It is found in the nucleus. Functionally, induces disassembly of actin filaments in conjunction with ADF/cofilin family proteins. Doesn't sever actin filaments alone, but caps the barbed ends of filaments severed by cofilin, which blocks annealing and depolymerization and allows more extensive severing by cofilin. The protein is WD repeat-containing protein 1-A (wdr1-a) of Xenopus laevis (African clawed frog).